We begin with the raw amino-acid sequence, 445 residues long: Potassium/proton antiporter CemA (445 aa).

Helical transmembrane passes span 44–64, 330–350, 368–388, and 405–425; these read MQVS…VNIC, ALTC…ILIL, LIII…GWKL, and FILC…KYWI.

Belongs to the CemA family.

It is found in the plastid. The protein resides in the chloroplast inner membrane. The catalysed reaction is K(+)(in) + H(+)(out) = K(+)(out) + H(+)(in). Functionally, contributes to K(+)/H(+) antiport activity by supporting proton efflux to control proton extrusion and homeostasis in chloroplasts in a light-dependent manner to modulate photosynthesis. Prevents excessive induction of non-photochemical quenching (NPQ) under continuous-light conditions. Indirectly promotes efficient inorganic carbon uptake into chloroplasts. This chain is Potassium/proton antiporter CemA, found in Pleurastrum terricola (Filamentous green alga).